The following is a 340-amino-acid chain: Ketol-acid reductoisomerase (NADP(+)) (340 aa).

Residues Met-1–Thr-182 enclose the KARI N-terminal Rossmann domain. Residues Tyr-24–Gln-27, Arg-48, Ser-51, Ser-53, and Asp-83–Gln-86 each bind NADP(+). His-108 is a catalytic residue. NADP(+) is bound at residue Gly-134. Residues Asn-183–Ile-329 enclose the KARI C-terminal knotted domain. 4 residues coordinate Mg(2+): Asp-191, Glu-195, Glu-227, and Glu-231. Ser-252 provides a ligand contact to substrate.

This sequence belongs to the ketol-acid reductoisomerase family. It depends on Mg(2+) as a cofactor.

The enzyme catalyses (2R)-2,3-dihydroxy-3-methylbutanoate + NADP(+) = (2S)-2-acetolactate + NADPH + H(+). It carries out the reaction (2R,3R)-2,3-dihydroxy-3-methylpentanoate + NADP(+) = (S)-2-ethyl-2-hydroxy-3-oxobutanoate + NADPH + H(+). Its pathway is amino-acid biosynthesis; L-isoleucine biosynthesis; L-isoleucine from 2-oxobutanoate: step 2/4. The protein operates within amino-acid biosynthesis; L-valine biosynthesis; L-valine from pyruvate: step 2/4. In terms of biological role, involved in the biosynthesis of branched-chain amino acids (BCAA). Catalyzes an alkyl-migration followed by a ketol-acid reduction of (S)-2-acetolactate (S2AL) to yield (R)-2,3-dihydroxy-isovalerate. In the isomerase reaction, S2AL is rearranged via a Mg-dependent methyl migration to produce 3-hydroxy-3-methyl-2-ketobutyrate (HMKB). In the reductase reaction, this 2-ketoacid undergoes a metal-dependent reduction by NADPH to yield (R)-2,3-dihydroxy-isovalerate. The sequence is that of Ketol-acid reductoisomerase (NADP(+)) from Cereibacter sphaeroides (strain ATCC 17029 / ATH 2.4.9) (Rhodobacter sphaeroides).